We begin with the raw amino-acid sequence, 213 residues long: Large ribosomal subunit protein uL18c (213 aa).

It belongs to the universal ribosomal protein uL18 family.

The protein localises to the plastid. It is found in the apicoplast. In Plasmodium falciparum (isolate 3D7), this protein is Large ribosomal subunit protein uL18c (RPL18).